A 59-amino-acid polypeptide reads, in one-letter code: Gonadotropin-releasing hormone receptor (59 aa).

The Cytoplasmic portion of the chain corresponds to 1–2 (VA). The chain crosses the membrane as a helical span at residues 3-23 (FATSFTVCWTPYYVLGIWYWF). Over 24–37 (DPEMLNRVSDPVNH) the chain is Extracellular. The helical transmembrane segment at 38 to 58 (FFFLFAFLNPCFDPLIYGYFS) threads the bilayer. Residue L59 is a topological domain, cytoplasmic.

Belongs to the G-protein coupled receptor 1 family.

It is found in the cell membrane. Receptor for gonadotropin releasing hormone (GnRH) that mediates the action of GnRH to stimulate the secretion of the gonadotropic hormones luteinizing hormone (LH) and follicle-stimulating hormone (FSH). This receptor mediates its action by association with G-proteins that activate a phosphatidylinositol-calcium second messenger system. The sequence is that of Gonadotropin-releasing hormone receptor (GNRHR) from Macaca mulatta (Rhesus macaque).